A 608-amino-acid polypeptide reads, in one-letter code: Chaperone protein HtpG (608 aa).

An a; substrate-binding region spans residues 1-332; that stretch reads MQFQTEVNQL…VEDLPLNVSR (332 aa). The segment at 333-536 is b; the sequence is EILQENQILK…KNKPDFAMQQ (204 aa). Residues 537–608 are c; that stretch reads LLKQMGQEQN…LTKIINKAFS (72 aa).

The protein belongs to the heat shock protein 90 family. Homodimer.

It is found in the cytoplasm. Its function is as follows. Molecular chaperone. Has ATPase activity. This is Chaperone protein HtpG from Campylobacter jejuni (strain RM1221).